The sequence spans 470 residues: UDP-N-acetylmuramoylalanine--D-glutamate ligase (470 aa).

Position 120-126 (120-126 (GSNGKTT)) interacts with ATP.

Belongs to the MurCDEF family.

The protein localises to the cytoplasm. The enzyme catalyses UDP-N-acetyl-alpha-D-muramoyl-L-alanine + D-glutamate + ATP = UDP-N-acetyl-alpha-D-muramoyl-L-alanyl-D-glutamate + ADP + phosphate + H(+). The protein operates within cell wall biogenesis; peptidoglycan biosynthesis. Functionally, cell wall formation. Catalyzes the addition of glutamate to the nucleotide precursor UDP-N-acetylmuramoyl-L-alanine (UMA). The sequence is that of UDP-N-acetylmuramoylalanine--D-glutamate ligase from Nitrosomonas eutropha (strain DSM 101675 / C91 / Nm57).